Reading from the N-terminus, the 263-residue chain is 3-methyl-2-oxobutanoate hydroxymethyltransferase (263 aa).

Mg(2+) contacts are provided by aspartate 44 and aspartate 83. Residues 44–45 (DS), aspartate 83, and lysine 112 each bind 3-methyl-2-oxobutanoate. Glutamate 114 lines the Mg(2+) pocket. The active-site Proton acceptor is the glutamate 181.

The protein belongs to the PanB family. Homodecamer; pentamer of dimers. Requires Mg(2+) as cofactor.

It localises to the cytoplasm. The catalysed reaction is 3-methyl-2-oxobutanoate + (6R)-5,10-methylene-5,6,7,8-tetrahydrofolate + H2O = 2-dehydropantoate + (6S)-5,6,7,8-tetrahydrofolate. It participates in cofactor biosynthesis; (R)-pantothenate biosynthesis; (R)-pantoate from 3-methyl-2-oxobutanoate: step 1/2. Functionally, catalyzes the reversible reaction in which hydroxymethyl group from 5,10-methylenetetrahydrofolate is transferred onto alpha-ketoisovalerate to form ketopantoate. In Nitrosospira multiformis (strain ATCC 25196 / NCIMB 11849 / C 71), this protein is 3-methyl-2-oxobutanoate hydroxymethyltransferase.